The primary structure comprises 102 residues: Probable non-specific lipid-transfer protein (102 aa).

Positions 1–35 (MAMAMGMAMRKEAAVAVMMVMVVTLAAGADAGAGA) are cleaved as a signal peptide. 4 cysteine pairs are disulfide-bonded: Cys37/Cys71, Cys45/Cys59, Cys60/Cys95, and Cys69/Cys102.

It belongs to the plant LTP family. B11E subfamily. Aleurone.

Potential phospholipid transfer protein. This chain is Probable non-specific lipid-transfer protein (LTP2), found in Hordeum vulgare (Barley).